The following is a 601-amino-acid chain: Terpinolene synthase, chloroplastic (601 aa).

Residues 1 to 32 (MSTFVISNSMHVGISFSFLHKLPQTPPPQVVC) constitute a chloroplast transit peptide. Mg(2+)-binding residues include Asp354, Asp358, Asp498, Thr502, and Glu506. The DDXXD motif motif lies at 354–358 (DDVYD).

This sequence belongs to the terpene synthase family. Tpsd subfamily. Mg(2+) serves as cofactor. Requires Mn(2+) as cofactor.

The protein resides in the plastid. It is found in the chloroplast. The enzyme catalyses (2E)-geranyl diphosphate = terpinolene + diphosphate. Its pathway is secondary metabolite biosynthesis; terpenoid biosynthesis. In terms of biological role, monoterpene synthase that catalyzes the formation of terpinolene and other monoterpenes from geranyl diphosphate. The sequence is that of Terpinolene synthase, chloroplastic (TES) from Ocimum basilicum (Sweet basil).